The chain runs to 159 residues: Protein-export protein SecB (159 aa).

Belongs to the SecB family. Homotetramer, a dimer of dimers. One homotetramer interacts with 1 SecA dimer.

The protein resides in the cytoplasm. Functionally, one of the proteins required for the normal export of preproteins out of the cell cytoplasm. It is a molecular chaperone that binds to a subset of precursor proteins, maintaining them in a translocation-competent state. It also specifically binds to its receptor SecA. The protein is Protein-export protein SecB of Pseudomonas fluorescens (strain SBW25).